Reading from the N-terminus, the 957-residue chain is Dystrophin-related protein 2 (957 aa).

Spectrin repeat units follow at residues 102-179 (DLSG…EELE) and 231-337 (EHLL…QLQD). Residues 358 to 383 (WERAISPNKVPYYINHQAQTTCWDHP) enclose the WW domain. The segment at 605 to 661 (KHQTKCSICRQCPIKGFRYRSLKQFNVDICQTCFLTGRASKGNKLHYPIMEYYTPTT) adopts a ZZ-type; degenerate zinc-finger fold. Zn(2+) contacts are provided by C610, C613, C634, and C637. S748 bears the Phosphoserine mark. Residues 876–894 (QPPSESDGNGSAGSSLASS) show a composition bias toward low complexity. Positions 876 to 923 (QPPSESDGNGSAGSSLASSPRQSEGSHPREKGQTTPDTEVADDVGSKS) are disordered. T910 bears the Phosphothreonine mark.

In terms of assembly, interacts with PRX; this enhances phosphorylation. Identified in a dystroglycan complex that contains at least PRX, DRP2, UTRN, DMD and DAG1. In terms of tissue distribution, detected in quadriceps nerve Schwann cells. Detected in sciatic nerve. Detected in trigeminal nerve Schwann cells (at protein level). Detected in brain and spinal cord.

Its subcellular location is the postsynaptic density. It is found in the cell projection. The protein localises to the dendrite. It localises to the perikaryon. The protein resides in the cell membrane. Required for normal myelination and for normal organization of the cytoplasm and the formation of Cajal bands in myelinating Schwann cells. Required for normal PRX location at appositions between the abaxonal surface of the myelin sheath and the Schwann cell plasma membrane. Possibly involved in membrane-cytoskeleton interactions of the central nervous system. In Mus musculus (Mouse), this protein is Dystrophin-related protein 2 (Drp2).